A 465-amino-acid chain; its full sequence is MLSAALRLTAKRNVRSLATASSSSYPGALLNVPKTQVTRLPNGLTVATESNPALATATVGVWIDSGSRAETKANNGVAHFLEHISFKGTKQRTQSGLEIEIENMGGHLNAYTSREQTVYYAKLFSQDVAKGVNILGDILQNSTLDPGAIDRERAVILREAEEVDKQVEEVVFDHLHAAAFPENALGYTILGPKENIQTLSQADLQAYIKNNYTADRMVVVGAGNVDHAELCKLAETNFGKLPQGSGKAKFVRPAFTGSDVRIRVDDMPTAHIALAVEGASWTSADHWPLLVASAMIGSYDRAAGNAHPSSKLAQIVAKHNLANSFTSFNTTYSDTGLWGIYIQSNNRDNLDDLAHFTVREWMRLATAPSEGEVAIAKQQLKTSLLLALDGTTPVAEEIGRQMLAYGRRLSPFEIDRLVDAVTVEDVKRVANEFIYDRDLAIVAVGPVECLPDYNRIRSAMNLLRY.

Zn(2+) is bound at residue H79. E82 functions as the Proton acceptor in the catalytic mechanism. Zn(2+) is bound by residues H83 and E159.

The protein belongs to the peptidase M16 family. As to quaternary structure, heterodimer of an alpha subunit and a beta subunit subunits, forming the mitochondrial processing protease (MPP) in which the alpha subunit is involved in substrate recognition and binding and the beta subunit is the catalytic subunit. Zn(2+) is required as a cofactor.

Its subcellular location is the mitochondrion matrix. The catalysed reaction is Release of N-terminal transit peptides from precursor proteins imported into the mitochondrion, typically with Arg in position P2.. Binding to the alpha subunit is required for catalytic activity. In terms of biological role, catalytic subunit of the essential mitochondrial processing protease (MPP), which cleaves the mitochondrial sequence off newly imported precursors proteins. Preferentially, cleaves after an arginine at position P2. This Blastocladiella emersonii (Aquatic fungus) protein is Mitochondrial-processing peptidase subunit beta (MPP1).